A 120-amino-acid chain; its full sequence is Aspartate 1-decarboxylase (120 aa).

Catalysis depends on Ser25, which acts as the Schiff-base intermediate with substrate; via pyruvic acid. Ser25 carries the pyruvic acid (Ser) modification. Thr57 serves as a coordination point for substrate. The Proton donor role is filled by Tyr58. 73–75 (GAA) contributes to the substrate binding site.

This sequence belongs to the PanD family. Heterooctamer of four alpha and four beta subunits. Pyruvate serves as cofactor. In terms of processing, is synthesized initially as an inactive proenzyme, which is activated by self-cleavage at a specific serine bond to produce a beta-subunit with a hydroxyl group at its C-terminus and an alpha-subunit with a pyruvoyl group at its N-terminus.

The protein resides in the cytoplasm. The enzyme catalyses L-aspartate + H(+) = beta-alanine + CO2. It functions in the pathway cofactor biosynthesis; (R)-pantothenate biosynthesis; beta-alanine from L-aspartate: step 1/1. In terms of biological role, catalyzes the pyruvoyl-dependent decarboxylation of aspartate to produce beta-alanine. The polypeptide is Aspartate 1-decarboxylase (Methylibium petroleiphilum (strain ATCC BAA-1232 / LMG 22953 / PM1)).